The sequence spans 345 residues: uncharacterized protein (345 aa).

The next 2 membrane-spanning stretches (helical) occupy residues 23–43 (VVGFCGVFALIALSLGIYSYV) and 56–76 (FLIALGGFTLLLSFVINFVAL). The disordered stretch occupies residues 326-345 (VTEPTTNSKRKPVKAKKAKK). The span at 333–345 (SKRKPVKAKKAKK) shows a compositional bias: basic residues.

The protein localises to the cell membrane. This is an uncharacterized protein from Mycoplasma pneumoniae (strain ATCC 29342 / M129 / Subtype 1) (Mycoplasmoides pneumoniae).